We begin with the raw amino-acid sequence, 227 residues long: Ribose-5-phosphate isomerase A (227 aa).

Substrate is bound by residues 26 to 29 (TGST), 82 to 85 (DGAD), and 95 to 98 (KGGG). Catalysis depends on Glu104, which acts as the Proton acceptor. Lys122 lines the substrate pocket.

Belongs to the ribose 5-phosphate isomerase family. In terms of assembly, homodimer.

It carries out the reaction aldehydo-D-ribose 5-phosphate = D-ribulose 5-phosphate. Its pathway is carbohydrate degradation; pentose phosphate pathway; D-ribose 5-phosphate from D-ribulose 5-phosphate (non-oxidative stage): step 1/1. In terms of biological role, catalyzes the reversible conversion of ribose-5-phosphate to ribulose 5-phosphate. The chain is Ribose-5-phosphate isomerase A from Streptococcus equi subsp. equi (strain 4047).